Reading from the N-terminus, the 208-residue chain is AN1-type zinc finger protein 6 (208 aa).

An A20-type zinc finger spans residues 8-42 (SQVPMLCSTGCGFYGNPRTNGMCSVCYKEHLQRQN). 4 residues coordinate Zn(2+): Cys-14, Cys-18, Cys-30, and Cys-33. The segment covering 41 to 68 (QNSSNGRISPPATSVSSLSESLPVQCTD) has biased composition (polar residues). The tract at residues 41–140 (QNSSNGRISP…PSEEQSKSLE (100 aa)) is disordered. Ser-49 bears the Phosphoserine mark. Positions 75–94 (QSTLDSTSSSMQPSPVSNQS) are enriched in low complexity. Polar residues-rich tracts occupy residues 95 to 110 (LLSE…STSV) and 120 to 133 (LQAS…QPSE). The AN1-type zinc-finger motif lies at 143–189 (KQKKNRCFMCRKKVGLTGFECRCGNVYCGVHRYSDVHNCSYNYKADA). 8 residues coordinate Zn(2+): Cys-149, Cys-152, Cys-163, Cys-165, Cys-170, His-173, His-179, and Cys-181. Lys-204 bears the N6-acetyllysine mark.

In terms of assembly, interacts with PKN1. Interacts with TRAF2. Interacts with mono- and polyubiquitin. Interacts with PEX6. Interacts with PEX5 (Cys-linked ubiquitinated).

The protein localises to the cytoplasm. In terms of biological role, involved in regulation of TNF-alpha induced NF-kappa-B activation and apoptosis. Involved in modulation of 'Lys-48'-linked polyubiquitination status of TRAF2 and decreases association of TRAF2 with RIPK1. Required for PTS1 target sequence-dependent protein import into peroxisomes and PEX5 stability; may cooperate with PEX6. In vitro involved in PEX5 export from the cytosol to peroxisomes. This Pongo abelii (Sumatran orangutan) protein is AN1-type zinc finger protein 6 (ZFAND6).